We begin with the raw amino-acid sequence, 404 residues long: Multidrug resistance protein MdtG (404 aa).

Helical transmembrane passes span 19–39 (LGCF…PLYV), 56–76 (LVFS…GGLA), 90–110 (LGMA…QFLI), 113–133 (ALLG…ATQV), 149–169 (GVSG…HYGL), 171–191 (PVFF…FFFI), 222–242 (LFVT…ILTL), 254–274 (IAFI…LSAP), 288–308 (ILIV…FVQT), 317–337 (FLLG…LVYN), and 376–396 (AVFC…WNSL).

It belongs to the major facilitator superfamily. DHA1 family. MdtG (TC 2.A.1.2.20) subfamily.

It is found in the cell inner membrane. This chain is Multidrug resistance protein MdtG, found in Salmonella paratyphi C (strain RKS4594).